Here is a 779-residue protein sequence, read N- to C-terminus: Acyl-homoserine lactone acylase PvdQ (779 aa).

The N-terminal stretch at 1 to 25 is a signal peptide; sequence MIISRPLCGFVFAGLSFAVILPAQA. Residues 202–223 constitute a propeptide, spacer peptide; the sequence is SQQVQALQLAAVRNQRFALERG. Residue serine 224 is the Nucleophile of the active site. Residues 731–746 show a composition bias toward polar residues; sequence ESSNPQSAHSSDQTEA. The disordered stretch occupies residues 731-752; sequence ESSNPQSAHSSDQTEAFSKKQW.

Belongs to the peptidase S45 family. Heterodimer of an alpha subunit and a beta subunit processed from the same precursor.

It localises to the periplasm. It carries out the reaction an N-acyl-L-homoserine lactone + H2O = L-homoserine lactone + a carboxylate. In terms of biological role, catalyzes the deacylation of acyl-homoserine lactone (AHL or acyl-HSL), releasing homoserine lactone (HSL) and the corresponding fatty acid. Possesses a specificity for the degradation of long-chain acyl-HSLs (side chains of 11 to 14 carbons in length). The chain is Acyl-homoserine lactone acylase PvdQ (pvdQ) from Pseudomonas savastanoi pv. phaseolicola (strain 1448A / Race 6) (Pseudomonas syringae pv. phaseolicola (strain 1448A / Race 6)).